A 93-amino-acid chain; its full sequence is uncharacterized protein (93 aa).

A Sm domain is found at methionine 1–methionine 76.

As to quaternary structure, part of the core SMN complex at least composed of smn1, yip11/gem2, gem6, gem7 and gem8. Interacts with gem7; the interaction is direct.

Functionally, the SMN complex catalyzes the assembly of small nuclear ribonucleoproteins (snRNPs), the building blocks of the spliceosome, and thereby plays an important role in the splicing of cellular pre-mRNAs. Most spliceosomal snRNPs contain a common set of Sm proteins smb1, smd1, smd2, smd3, sme1, smf1 and smg1 that assemble in a heptameric protein ring on the Sm site of the small nuclear RNA to form the core snRNP (Sm core). In the cytosol, the Sm proteins smd1, smd2, sme1, smf1 and smg1 (5Sm) are trapped in an inactive 6S pICln-Sm complex by the chaperone saf5. To complete assembly of core snRNPs, the SMN complex accepts 5Sm from saf5. Binding of snRNA inside 5Sm triggers eviction of the SMN complex, thereby allowing binding of smd3 and smb1 to complete assembly of the core snRNP. This is an uncharacterized protein from Schizosaccharomyces pombe (strain 972 / ATCC 24843) (Fission yeast).